The following is a 658-amino-acid chain: MSNTVSLQFPDGSVREYDASMTGAALAESISKSLAKKAVAYAVDGTVRDLSDPLGASGKVEIITREDPRALELIRHDTAHVLAEAVQELFPGTQVTIGPVIENGFYYDFARNEPFTLDDLPVIEKKMREIIQRNKPFTKEVWSREKAKQVFSDKGESYKVELVDAIPAGQDLKIYYQGDWFDLCRGPHMASTGQIGNSFKLMKVAGAYWRGDANNPMLTRIYGTAFANDNDLQAYLHMLEEAEKRDHRRLGREMDLFHFQEEGPGVVFWHAKGWKMFQNLVSYMRRRLDSHGYQEVNTPQVLDKSLWETSGHWGWYRDNMFKVTVAGDDTDDDRVFALKPMNCPGHVQIFKHGLKSYRDLPIKLAEFGNVHRYEPSGALHGLMRVRGFTQDDAHIFCTEEQMAAECLQINDLILSVYKDFGFEEITIKLSTRPEKRVGSDELWDRAESVMMTVLEQIRQQSNNIKTGILPGEGAFYGPKFEYTLKDAIGREWQCGTTQVDFNLPERFGAFYIGADSEKKQPVMIHRAICGSMERFLGILIENFAGHMPLWFAPVQVVVATITSDADEYAKEAAAKLKAAGLQVVTDLRNEKINYKVREHSLQKVPVILVCGKREAEEKTVNMRRLGSRDQESMTLDEAIARLCEEATPPDLLRLKNAG.

The region spanning 1-64 (MSNTVSLQFP…GASGKVEIIT (64 aa)) is the TGS domain. Positions 246–548 (DHRRLGREMD…LIENFAGHMP (303 aa)) are catalytic. C343, H394, and H525 together coordinate Zn(2+).

This sequence belongs to the class-II aminoacyl-tRNA synthetase family. As to quaternary structure, homodimer. Zn(2+) serves as cofactor.

It is found in the cytoplasm. It catalyses the reaction tRNA(Thr) + L-threonine + ATP = L-threonyl-tRNA(Thr) + AMP + diphosphate + H(+). Functionally, catalyzes the attachment of threonine to tRNA(Thr) in a two-step reaction: L-threonine is first activated by ATP to form Thr-AMP and then transferred to the acceptor end of tRNA(Thr). Also edits incorrectly charged L-seryl-tRNA(Thr). The polypeptide is Threonine--tRNA ligase (Brucella melitensis biotype 1 (strain ATCC 23456 / CCUG 17765 / NCTC 10094 / 16M)).